Consider the following 385-residue polypeptide: UDP-N-acetylglucosamine--N-acetylmuramyl-(pentapeptide) pyrophosphoryl-undecaprenol N-acetylglucosamine transferase (385 aa).

Residues 24 to 26 (TAG), N143, R180, S214, and Q310 contribute to the UDP-N-acetyl-alpha-D-glucosamine site.

It belongs to the glycosyltransferase 28 family. MurG subfamily.

The protein resides in the cell membrane. The catalysed reaction is di-trans,octa-cis-undecaprenyl diphospho-N-acetyl-alpha-D-muramoyl-L-alanyl-D-glutamyl-meso-2,6-diaminopimeloyl-D-alanyl-D-alanine + UDP-N-acetyl-alpha-D-glucosamine = di-trans,octa-cis-undecaprenyl diphospho-[N-acetyl-alpha-D-glucosaminyl-(1-&gt;4)]-N-acetyl-alpha-D-muramoyl-L-alanyl-D-glutamyl-meso-2,6-diaminopimeloyl-D-alanyl-D-alanine + UDP + H(+). It participates in cell wall biogenesis; peptidoglycan biosynthesis. Its function is as follows. Cell wall formation. Catalyzes the transfer of a GlcNAc subunit on undecaprenyl-pyrophosphoryl-MurNAc-pentapeptide (lipid intermediate I) to form undecaprenyl-pyrophosphoryl-MurNAc-(pentapeptide)GlcNAc (lipid intermediate II). The sequence is that of UDP-N-acetylglucosamine--N-acetylmuramyl-(pentapeptide) pyrophosphoryl-undecaprenol N-acetylglucosamine transferase from Mycolicibacterium smegmatis (strain ATCC 700084 / mc(2)155) (Mycobacterium smegmatis).